We begin with the raw amino-acid sequence, 276 residues long: Inositol-1-monophosphatase ImpA (276 aa).

Mg(2+) contacts are provided by E74, D90, I92, and D93. E74 provides a ligand contact to substrate. Residues 92 to 95 (IDGT), R192, and D221 each bind substrate. A Mg(2+)-binding site is contributed by D221.

Belongs to the inositol monophosphatase superfamily. It depends on Mg(2+) as a cofactor.

It carries out the reaction a myo-inositol phosphate + H2O = myo-inositol + phosphate. It functions in the pathway polyol metabolism; myo-inositol biosynthesis; myo-inositol from D-glucose 6-phosphate: step 2/2. Catalyzes the dephosphorylation of inositol 1-phosphate (I-1-P) to yield free myo-inositol, a key metabolite in mycobacteria. This Mycolicibacterium smegmatis (strain ATCC 700084 / mc(2)155) (Mycobacterium smegmatis) protein is Inositol-1-monophosphatase ImpA (impA).